The following is a 331-amino-acid chain: Phenylalanine--tRNA ligase alpha subunit (331 aa).

Glutamate 252 is a Mg(2+) binding site.

The protein belongs to the class-II aminoacyl-tRNA synthetase family. Phe-tRNA synthetase alpha subunit type 1 subfamily. In terms of assembly, tetramer of two alpha and two beta subunits. The cofactor is Mg(2+).

It localises to the cytoplasm. The catalysed reaction is tRNA(Phe) + L-phenylalanine + ATP = L-phenylalanyl-tRNA(Phe) + AMP + diphosphate + H(+). The polypeptide is Phenylalanine--tRNA ligase alpha subunit (Hahella chejuensis (strain KCTC 2396)).